A 475-amino-acid polypeptide reads, in one-letter code: Aspartyl/glutamyl-tRNA(Asn/Gln) amidotransferase subunit B (475 aa).

It belongs to the GatB/GatE family. GatB subfamily. Heterotrimer of A, B and C subunits.

The enzyme catalyses L-glutamyl-tRNA(Gln) + L-glutamine + ATP + H2O = L-glutaminyl-tRNA(Gln) + L-glutamate + ADP + phosphate + H(+). It carries out the reaction L-aspartyl-tRNA(Asn) + L-glutamine + ATP + H2O = L-asparaginyl-tRNA(Asn) + L-glutamate + ADP + phosphate + 2 H(+). In terms of biological role, allows the formation of correctly charged Asn-tRNA(Asn) or Gln-tRNA(Gln) through the transamidation of misacylated Asp-tRNA(Asn) or Glu-tRNA(Gln) in organisms which lack either or both of asparaginyl-tRNA or glutaminyl-tRNA synthetases. The reaction takes place in the presence of glutamine and ATP through an activated phospho-Asp-tRNA(Asn) or phospho-Glu-tRNA(Gln). In Bacillus cereus (strain G9842), this protein is Aspartyl/glutamyl-tRNA(Asn/Gln) amidotransferase subunit B.